A 58-amino-acid chain; its full sequence is Large ribosomal subunit protein uL30 (58 aa).

The protein belongs to the universal ribosomal protein uL30 family. Part of the 50S ribosomal subunit.

This Bacteroides fragilis (strain ATCC 25285 / DSM 2151 / CCUG 4856 / JCM 11019 / LMG 10263 / NCTC 9343 / Onslow / VPI 2553 / EN-2) protein is Large ribosomal subunit protein uL30.